Here is a 233-residue protein sequence, read N- to C-terminus: Large ribosomal subunit protein uL1 (233 aa).

Belongs to the universal ribosomal protein uL1 family. As to quaternary structure, part of the 50S ribosomal subunit.

Binds directly to 23S rRNA. The L1 stalk is quite mobile in the ribosome, and is involved in E site tRNA release. Its function is as follows. Protein L1 is also a translational repressor protein, it controls the translation of the L11 operon by binding to its mRNA. This chain is Large ribosomal subunit protein uL1, found in Proteus mirabilis (strain HI4320).